The primary structure comprises 156 residues: ATP synthase subunit b (156 aa).

A helical transmembrane segment spans residues 7 to 27; the sequence is LFAQLVVFFILAWFTMKFVWP.

It belongs to the ATPase B chain family. F-type ATPases have 2 components, F(1) - the catalytic core - and F(0) - the membrane proton channel. F(1) has five subunits: alpha(3), beta(3), gamma(1), delta(1), epsilon(1). F(0) has four main subunits: a(1), b(2) and c(10-14). The alpha and beta chains form an alternating ring which encloses part of the gamma chain. F(1) is attached to F(0) by a central stalk formed by the gamma and epsilon chains, while a peripheral stalk is formed by the delta and b chains.

Its subcellular location is the cell inner membrane. Functionally, f(1)F(0) ATP synthase produces ATP from ADP in the presence of a proton or sodium gradient. F-type ATPases consist of two structural domains, F(1) containing the extramembraneous catalytic core and F(0) containing the membrane proton channel, linked together by a central stalk and a peripheral stalk. During catalysis, ATP synthesis in the catalytic domain of F(1) is coupled via a rotary mechanism of the central stalk subunits to proton translocation. Component of the F(0) channel, it forms part of the peripheral stalk, linking F(1) to F(0). This is ATP synthase subunit b from Methylibium petroleiphilum (strain ATCC BAA-1232 / LMG 22953 / PM1).